Reading from the N-terminus, the 1020-residue chain is Glycine dehydrogenase (decarboxylating), mitochondrial (1020 aa).

The transit peptide at 1–35 (MQSCARAWGLRLGRGVGGGRRLAGGSGPCWAPRSR) directs the protein to the mitochondrion. A disordered region spans residues 21–46 (RLAGGSGPCWAPRSRDSSSGGGDSAA). K447, K514, K648, and K664 each carry N6-acetyllysine. An N6-(pyridoxal phosphate)lysine modification is found at K754.

It belongs to the GcvP family. In terms of assembly, homodimer. Interacts with GCSH. The glycine cleavage system is composed of four proteins: P (GLDC), T (GCST), L (DLD) and H (GCSH). Pyridoxal 5'-phosphate serves as cofactor.

It localises to the mitochondrion. It catalyses the reaction N(6)-[(R)-lipoyl]-L-lysyl-[glycine-cleavage complex H protein] + glycine + H(+) = N(6)-[(R)-S(8)-aminomethyldihydrolipoyl]-L-lysyl-[glycine-cleavage complex H protein] + CO2. Its activity is regulated as follows. Stimulated by lipoic acid. Inhibited in presence of methylamine. Functionally, the glycine cleavage system catalyzes the degradation of glycine. The P protein (GLDC) binds the alpha-amino group of glycine through its pyridoxal phosphate cofactor; CO(2) is released and the remaining methylamine moiety is then transferred to the lipoamide cofactor of the H protein (GCSH). This is Glycine dehydrogenase (decarboxylating), mitochondrial from Homo sapiens (Human).